The sequence spans 561 residues: Oxygen-dependent choline dehydrogenase (561 aa).

An FAD-binding site is contributed by 7-36 (DYIIVGAGSAGNVLASRLAEDADVTVLLLE). Histidine 474 acts as the Proton acceptor in catalysis.

It belongs to the GMC oxidoreductase family. It depends on FAD as a cofactor.

It carries out the reaction choline + A = betaine aldehyde + AH2. It catalyses the reaction betaine aldehyde + NAD(+) + H2O = glycine betaine + NADH + 2 H(+). It functions in the pathway amine and polyamine biosynthesis; betaine biosynthesis via choline pathway; betaine aldehyde from choline (cytochrome c reductase route): step 1/1. Involved in the biosynthesis of the osmoprotectant glycine betaine. Catalyzes the oxidation of choline to betaine aldehyde and betaine aldehyde to glycine betaine at the same rate. In Paraburkholderia xenovorans (strain LB400), this protein is Oxygen-dependent choline dehydrogenase.